Consider the following 614-residue polypeptide: uncharacterized protein (614 aa).

The tract at residues 23–68 (YPIPSHNGDGESEKNSSDSTSSKVNAKVTSSLQGAPSTNDENSVSP) is disordered. Over residues 49–68 (KVTSSLQGAPSTNDENSVSP) the composition is skewed to polar residues.

It to C.trachomatis CT875.

This is an uncharacterized protein from Chlamydia muridarum (strain MoPn / Nigg).